A 933-amino-acid chain; its full sequence is Valine--tRNA ligase (933 aa).

Residues 58-68 (PNVTGSLHMGH) carry the 'HIGH' region motif. Residues 556-560 (KMSKS) carry the 'KMSKS' region motif. Position 559 (Lys559) interacts with ATP. Coiled-coil stretches lie at residues 807–833 (VTKN…ANKV) and 864–933 (EGLV…LGLK).

This sequence belongs to the class-I aminoacyl-tRNA synthetase family. ValS type 1 subfamily. As to quaternary structure, monomer.

The protein localises to the cytoplasm. The catalysed reaction is tRNA(Val) + L-valine + ATP = L-valyl-tRNA(Val) + AMP + diphosphate. Functionally, catalyzes the attachment of valine to tRNA(Val). As ValRS can inadvertently accommodate and process structurally similar amino acids such as threonine, to avoid such errors, it has a 'posttransfer' editing activity that hydrolyzes mischarged Thr-tRNA(Val) in a tRNA-dependent manner. The protein is Valine--tRNA ligase of Prochlorococcus marinus (strain SARG / CCMP1375 / SS120).